The chain runs to 923 residues: Transportin-3 (923 aa).

Met-1 carries the N-acetylmethionine modification. Position 74 is a phosphoserine (Ser-74). Phosphothreonine occurs at positions 242 and 896.

Interacts with (GTP-bound) Ran. Interacts with (phosphorylated) SFRS1 and SFRS2; leading to their nuclear import. Interacts with NUP62. Interacts with RBM4. Interacts with CPSF6, promoting its nuclear import.

It is found in the nucleus envelope. The protein resides in the cytoplasm. Importin, which transports target proteins into the nucleus. Specifically mediates the nuclear import of splicing factor serine/arginine (SR) proteins, such as RBM4, SFRS1 and SFRS2, by recognizing phosphorylated SR domains. Also mediates the nuclear import of serine/arginine (SR) protein CPSF6, independently of CPSF6 phosphorylation. The nuclear import process is regulated by the small GTPase Ran that partitions between cytoplasm and nucleus in the predominantly GDP- and GTP-bound form, respectively. Importin associates with target cargo proteins in the cytoplasm, and the competitive binding of GTP-bound Ran induces the release of cargos in the nucleus. This is Transportin-3 from Mus musculus (Mouse).